A 1887-amino-acid chain; its full sequence is DNA-directed RNA polymerase II subunit RPB1 (1887 aa).

The Zn(2+) site is built by C67, C70, C77, H80, C107, C110, C150, and C176. Residues 156–178 (MDLTKENQQPDPNKKPGHGGCGH) form a disordered region. Residues D487, D489, and D491 each contribute to the Mg(2+) site. The tract at residues 825-837 (PSEFYFHAMGGRE) is bridging helix. A Glycyl lysine isopeptide (Lys-Gly) (interchain with G-Cter in ubiquitin) cross-link involves residue K1260. Disordered stretches follow at residues 1528-1565 (TPGGPSFSPSAASDASGMSPSWSPAHPGSSPSSPGPSM) and 1579-1887 (YSPT…ESED). 3 stretches are compositionally biased toward low complexity: residues 1529-1565 (PGGPSFSPSAASDASGMSPSWSPAHPGSSPSSPGPSM), 1579-1610 (YSPTSPNYTASSPGGASPNYSPSSPNYSPTSP), and 1626-1650 (PQSTGYSPSSSGYSPTSPVYSPTVQ). Repeat 1 spans residues 1579–1585 (YSPTSPN). A C-terminal domain (CTD); 32 X 7 AA approximate tandem repeats of Y-[ST]-P-[STNVAPGN]-[STGMA]-[PSTR]-[SNAGCQKTLRIMH] region spans residues 1579-1881 (YSPTSPNYTA…SPAYSPSSPT (303 aa)). One copy of the 2; approximate repeat lies at 1586–1592 (YTASSPG). A run of 4 repeats spans residues 1598–1604 (YSPSSPN), 1605–1611 (YSPTSPL), 1631–1637 (YSPSSSG), and 1638–1644 (YSPTSPV). The span at 1651–1664 (FQSSPSFAGSGSNI) shows a compositional bias: polar residues. Positions 1665 to 1760 (YSPGNAYSPS…GVKYSPTSPT (96 aa)) are enriched in low complexity. Repeat copies occupy residues 1671 to 1677 (YSPSSSN), 1678 to 1684 (YSPNSPS), 1685 to 1691 (YSPTSPS), 1692 to 1698 (YSPSSPS), 1699 to 1705 (YSPTSPC), 1706 to 1712 (YSPTSPS), 1713 to 1719 (YSPTSPN), 1720 to 1726 (YTPVTPS), 1727 to 1733 (YSPTSPN), 1740 to 1746 (YSPASPA), 1754 to 1760 (YSPTSPT), 1761 to 1767 (YSPPSPS), 1777 to 1783 (YTPGSPQ), 1784 to 1790 (YSPASPK), 1791 to 1797 (YSPTSPL), 1798 to 1804 (YSPSSPQ), and 1811 to 1817 (YSPTGST). Over residues 1776-1786 (QYTPGSPQYSP) the composition is skewed to polar residues. A compositionally biased stretch (low complexity) spans 1788–1813 (SPKYSPTSPLYSPSSPQHSPSNQYSP). The span at 1814 to 1831 (TGSTYSATSPRYSPNMSI) shows a compositional bias: polar residues. The stretch at 1818 to 1824 (YSATSPR) is one 24; approximate repeat. 8 consecutive repeat copies span residues 1825 to 1831 (YSPNMSI), 1832 to 1838 (YSPSSTK), 1839 to 1845 (YSPTSPT), 1846 to 1852 (YTPTARN), 1853 to 1859 (YSPTSPM), 1860 to 1866 (YSPTAPS), 1868 to 1874 (YSPTSPA), and 1875 to 1881 (YSPSSPT). The segment covering 1832-1849 (YSPSSTKYSPTSPTYTPT) has biased composition (low complexity). Polar residues predominate over residues 1850-1859 (ARNYSPTSPM). The segment covering 1860 to 1881 (YSPTAPSHYSPTSPAYSPSSPT) has biased composition (low complexity).

It belongs to the RNA polymerase beta' chain family. As to quaternary structure, component of the RNA polymerase II (Pol II) complex consisting of 12 subunits. In terms of processing, the tandem 7 residues repeats in the C-terminal domain (CTD) can be highly phosphorylated. The phosphorylation activates Pol II. Phosphorylation occurs mainly at residues 'Ser-2' and 'Ser-5' of the heptapeptide repeat. The phosphorylation state is believed to result from the balanced action of site-specific CTD kinases and phosphatase, and a 'CTD code' that specifies the position of Pol II within the transcription cycle has been proposed. Post-translationally, following transcription stress, the elongating form of RNA polymerase II (RNA pol IIo) is polyubiquitinated via 'Lys-63'-linkages on Lys-1260 at DNA damage sites without leading to degradation: ubiquitination promotes RNA pol IIo backtracking to allow access by the transcription-coupled nucleotide excision repair (TC-NER) machinery. Subsequent DEF1-dependent polyubiquitination by the elongin complex via 'Lys-48'-linkages may lead to proteasome-mediated degradation; presumably at stalled RNA pol II where TC-NER has failed, to halt global transcription and enable 'last resort' DNA repair pathways.

It localises to the nucleus. It carries out the reaction RNA(n) + a ribonucleoside 5'-triphosphate = RNA(n+1) + diphosphate. Functionally, DNA-dependent RNA polymerase catalyzes the transcription of DNA into RNA using the four ribonucleoside triphosphates as substrates. Largest and catalytic component of RNA polymerase II which synthesizes mRNA precursors and many functional non-coding RNAs. Forms the polymerase active center together with the second largest subunit. Pol II is the central component of the basal RNA polymerase II transcription machinery. It is composed of mobile elements that move relative to each other. RPB1 is part of the core element with the central large cleft, the clamp element that moves to open and close the cleft and the jaws that are thought to grab the incoming DNA template. At the start of transcription, a single-stranded DNA template strand of the promoter is positioned within the central active site cleft of Pol II. A bridging helix emanates from RPB1 and crosses the cleft near the catalytic site and is thought to promote translocation of Pol II by acting as a ratchet that moves the RNA-DNA hybrid through the active site by switching from straight to bent conformations at each step of nucleotide addition. During transcription elongation, Pol II moves on the template as the transcript elongates. Elongation is influenced by the phosphorylation status of the C-terminal domain (CTD) of Pol II largest subunit (RPB1), which serves as a platform for assembly of factors that regulate transcription initiation, elongation, termination and mRNA processing. In Drosophila melanogaster (Fruit fly), this protein is DNA-directed RNA polymerase II subunit RPB1.